The chain runs to 167 residues: Telethonin (167 aa).

Phosphoserine is present on Ser-39. The tract at residues 144–167 (VPVSKPGALRRSLSRSMSQEAQRG) is disordered. The span at 157-167 (SRSMSQEAQRG) shows a compositional bias: polar residues.

In terms of assembly, interacts with MYOZ1, MYOZ2 and MYOZ3. Interacts with CSRP3. Interacts directly with the N-terminal Ig-like domains of 2 titin (TTN) molecules. Interacts with ANKRD2; the interaction is direct. Heart and skeletal muscle.

It is found in the cytoplasm. The protein localises to the myofibril. It localises to the sarcomere. Functionally, muscle assembly regulating factor. Mediates the antiparallel assembly of titin (TTN) molecules at the sarcomeric Z-disk. The polypeptide is Telethonin (TCAP) (Homo sapiens (Human)).